The following is a 192-amino-acid chain: Pyridoxal 5'-phosphate synthase subunit PdxT (192 aa).

46 to 48 serves as a coordination point for L-glutamine; sequence GES. The active-site Nucleophile is Cys-75. Residues Arg-101 and 129–130 each bind L-glutamine; that span reads IR. Residues His-166 and Glu-168 each act as charge relay system in the active site.

Belongs to the glutaminase PdxT/SNO family. In terms of assembly, in the presence of PdxS, forms a dodecamer of heterodimers. Only shows activity in the heterodimer.

The catalysed reaction is aldehydo-D-ribose 5-phosphate + D-glyceraldehyde 3-phosphate + L-glutamine = pyridoxal 5'-phosphate + L-glutamate + phosphate + 3 H2O + H(+). The enzyme catalyses L-glutamine + H2O = L-glutamate + NH4(+). It functions in the pathway cofactor biosynthesis; pyridoxal 5'-phosphate biosynthesis. In terms of biological role, catalyzes the hydrolysis of glutamine to glutamate and ammonia as part of the biosynthesis of pyridoxal 5'-phosphate. The resulting ammonia molecule is channeled to the active site of PdxS. In Staphylococcus carnosus (strain TM300), this protein is Pyridoxal 5'-phosphate synthase subunit PdxT.